The primary structure comprises 317 residues: Protoheme IX farnesyltransferase (317 aa).

7 consecutive transmembrane segments (helical) span residues 33–53 (VMSL…GEIN), 54–74 (PILG…SGAL), 117–137 (VILG…TIFF), 154–174 (IVIG…CVTG), 181–201 (VILF…LALF), 242–262 (FFTG…SAIF), and 285–305 (MFAY…ADHF).

This sequence belongs to the UbiA prenyltransferase family. Protoheme IX farnesyltransferase subfamily.

Its subcellular location is the cell inner membrane. It catalyses the reaction heme b + (2E,6E)-farnesyl diphosphate + H2O = Fe(II)-heme o + diphosphate. Its pathway is porphyrin-containing compound metabolism; heme O biosynthesis; heme O from protoheme: step 1/1. Functionally, converts heme B (protoheme IX) to heme O by substitution of the vinyl group on carbon 2 of heme B porphyrin ring with a hydroxyethyl farnesyl side group. This Agrobacterium fabrum (strain C58 / ATCC 33970) (Agrobacterium tumefaciens (strain C58)) protein is Protoheme IX farnesyltransferase.